A 194-amino-acid chain; its full sequence is Imidazole glycerol phosphate synthase subunit HisH (194 aa).

The Glutamine amidotransferase type-1 domain maps to 1-194; the sequence is MIIIDTGCAN…QLLKNFVENL (194 aa). C75 acts as the Nucleophile in catalysis. Catalysis depends on residues H175 and E177.

Heterodimer of HisH and HisF.

It localises to the cytoplasm. It catalyses the reaction 5-[(5-phospho-1-deoxy-D-ribulos-1-ylimino)methylamino]-1-(5-phospho-beta-D-ribosyl)imidazole-4-carboxamide + L-glutamine = D-erythro-1-(imidazol-4-yl)glycerol 3-phosphate + 5-amino-1-(5-phospho-beta-D-ribosyl)imidazole-4-carboxamide + L-glutamate + H(+). The catalysed reaction is L-glutamine + H2O = L-glutamate + NH4(+). It functions in the pathway amino-acid biosynthesis; L-histidine biosynthesis; L-histidine from 5-phospho-alpha-D-ribose 1-diphosphate: step 5/9. IGPS catalyzes the conversion of PRFAR and glutamine to IGP, AICAR and glutamate. The HisH subunit catalyzes the hydrolysis of glutamine to glutamate and ammonia as part of the synthesis of IGP and AICAR. The resulting ammonia molecule is channeled to the active site of HisF. The sequence is that of Imidazole glycerol phosphate synthase subunit HisH from Mannheimia succiniciproducens (strain KCTC 0769BP / MBEL55E).